A 421-amino-acid chain; its full sequence is Large ribosomal subunit protein uL4 (421 aa).

Alanine 2 is subject to N-acetylalanine. Lysine 14 is modified (N6-acetyllysine). Residue arginine 97 is modified to Omega-N-methylarginine. N6-acetyllysine is present on lysine 106. A Glycyl lysine isopeptide (Lys-Gly) (interchain with G-Cter in SUMO2) cross-link involves residue lysine 239. N6-acetyllysine is present on lysine 259. The residue at position 266 (threonine 266) is a Phosphothreonine. At serine 290 the chain carries Phosphoserine. Arginine 300 is modified (citrulline). A Glycyl lysine isopeptide (Lys-Gly) (interchain with G-Cter in SUMO2) cross-link involves residue lysine 327. An N6-acetyllysine mark is found at lysine 333 and lysine 353. A disordered region spans residues 359-421 (EAKSEEKGVP…PTTEEKKPAA (63 aa)). Lysine 361 carries the post-translational modification N6-acetyllysine; alternate. Lysine 361 is covalently cross-linked (Glycyl lysine isopeptide (Lys-Gly) (interchain with G-Cter in SUMO1); alternate). Serine 362 carries the post-translational modification Phosphoserine. Positions 368 to 391 (PGKKPRRKKGKKTVGVKKPKKPVV) are enriched in basic residues. Basic and acidic residues predominate over residues 401-421 (PAADKKPAEKKPTTEEKKPAA).

The protein belongs to the universal ribosomal protein uL4 family. As to quaternary structure, component of the large ribosomal subunit. May bind IPO9 with low affinity. Interacts with RBM3. In terms of processing, citrullinated by PADI4.

Its subcellular location is the cytoplasm. Functionally, component of the large ribosomal subunit. The ribosome is a large ribonucleoprotein complex responsible for the synthesis of proteins in the cell. The protein is Large ribosomal subunit protein uL4 (RPL4) of Canis lupus familiaris (Dog).